We begin with the raw amino-acid sequence, 198 residues long: MAQLYFRYGTMNSGKSIEILKVAYNYEEQGKPVVLLTSRLDDRDEVGYISSRIGMRRKAYPIGNDTDIFDYIDDISPRPYCVLIDEAQFLTRANVYDLARIVDELDIPVMAFGLKNDFQNNLFEGSKYLLLLSDKIEEIKTICHYCSRKATMVLRMEDGEPVYEGVQVQIGGHESYISVCRKHWFNPPRERIVPLKQN.

ATP contacts are provided by residues 9–16 and 85–88; these read GTMNSGKS and DEAQ. Residue Glu86 is the Proton acceptor of the active site. Zn(2+) contacts are provided by Cys143, Cys146, Cys180, and His183.

This sequence belongs to the thymidine kinase family. Homotetramer.

The protein localises to the cytoplasm. It carries out the reaction thymidine + ATP = dTMP + ADP + H(+). The sequence is that of Thymidine kinase from Streptococcus thermophilus (strain ATCC BAA-250 / LMG 18311).